Reading from the N-terminus, the 91-residue chain is uncharacterized protein (91 aa).

This sequence belongs to the UPF0440 family.

This is an uncharacterized protein from Methanothermobacter thermautotrophicus (strain ATCC 29096 / DSM 1053 / JCM 10044 / NBRC 100330 / Delta H) (Methanobacterium thermoautotrophicum).